The primary structure comprises 507 residues: MAVVVSNANAPAFEAKMTVYVFICVMIAAVGGLIFGYDIGISGGVSAMDDFLKEFFPAVWERKKHVHENNYCKYDNQFLQLFTSSLYLAALVASFVASATCSKLGRRPTMQFASIFFLIGVGLTAGAVNLVMLIIGRLFLGFGVGFGNQAVPLFLSEIAPAQLRGGLNIVFQLMVTIGILIANIVNYFTATVHPYGWRIALGGAGIPAVILLFGSLLIIETPTSLIERNKNEEGKEALRKIRGVDDINDEYESIVHACDIASQVKDPYRKLLKPASRPPFIIGMLLQLFQQFTGINAIMFYAPVLFQTVGFGSDAALLSAVITGSINVLATFVGIYLVDRTGRRFLLLQSSVHMLICQLIIGIILAKDLGVTGTLGRPQALVVVIFVCVYVMGFAWSWGPLGWLIPSETFPLETRSAGFAVAVSCNMFFTFVIAQAFLSMLCGMRSGIFFFFSGWIIVMGLFAFFFIPETKGIAIDDMRESVWKPHWFWKRYMLPEDDHHDIEKRNA.

The Cytoplasmic portion of the chain corresponds to 1-20 (MAVVVSNANAPAFEAKMTVY). 12 helical membrane passes run 21–41 (VFIC…DIGI), 78–98 (FLQL…FVAS), 115–135 (IFFL…MLII), 138–158 (LFLG…LSEI), 165–185 (GGLN…ANIV), 199–219 (IALG…LLII), 280–300 (FIIG…AIMF), 318–338 (LSAV…IYLV), 345–365 (FLLL…GIIL), 381–401 (LVVV…WGPL), 418–438 (GFAV…QAFL), and 447–467 (GIFF…FFFI). The Cytoplasmic segment spans residues 468 to 507 (PETKGIAIDDMRESVWKPHWFWKRYMLPEDDHHDIEKRNA).

This sequence belongs to the major facilitator superfamily. Sugar transporter (TC 2.A.1.1) family. Pollen specific.

It is found in the membrane. Inhibited by uncouplers such as 2,4-dinitrophenol and carbonyl cyanide-m-chlorophenyl-hydrazone. Its function is as follows. Mediates an active uptake of hexoses, probably by sugar/hydrogen symport. Can transport glucose, 3-O-methylglucose, mannose, fructose and galactose, and, to a lower extent, xylose and ribulose. The protein is Sugar transport protein 6 (STP6) of Arabidopsis thaliana (Mouse-ear cress).